A 443-amino-acid polypeptide reads, in one-letter code: MQRRDDPASRLTRSSGRSCSKDPSGAHPSVRLTPSRPSPLPHRPRGGGGGPRGGARASPATQPPPLLPPSTPGPDATVVGSAPTPLLPPSATAAVKMEPENKYLPELMAEKDSLDPSFTHAMQLLSVEIEKIQKGESKKDDEENYLDLFSHKNMKLKERVLIPVKQYPKFNFVGKILGPQGNTIKRLQEETGAKISVLGKGSMRDKAKEEELRKGGDPKYAHLNMDLHVFIEVFGPPCEAYALMAHAMEEVKKFLVPDMMDDICQEQFLELSYLNGVPEPSRGRGVSVRGRGAAPPPPPVPRGRGVGPPRGALVRGTPVRGSITRGATVTRGVPPPPTVRGAPTPRARTAGIQRIPLPPTPAPETYEDYGYDDTYAEQSYEGYEGYYSQSQGESEYYDYGHGELQDSYEAYGQDDWNGTRPSLKAPPARPVKGAYREHPYGRY.

The segment at methionine 1–alanine 94 is disordered. 2 positions are modified to phosphoserine: serine 18 and serine 20. Lysine 21 is subject to N6-acetyllysine. At serine 29 the chain carries Phosphoserine. At threonine 33 the chain carries Phosphothreonine. 2 positions are modified to asymmetric dimethylarginine; by PRMT1: arginine 45 and arginine 52. Phosphoserine; by MAPK1 is present on serine 58. A compositionally biased stretch (pro residues) spans threonine 61–proline 72. 2 positions are modified to phosphothreonine; by MAPK1: threonine 71 and threonine 84. Positions serine 81–alanine 94 are enriched in low complexity. Residues lysine 96 and lysine 102 each participate in a glycyl lysine isopeptide (Lys-Gly) (interchain with G-Cter in SUMO2) cross-link. Positions glutamate 100–methionine 260 are involved in homodimerization. Serine 113 is subject to Phosphoserine. A Glycyl lysine isopeptide (Lys-Gly) (interchain with G-Cter in SUMO2) cross-link involves residue lysine 139. Position 150 is a phosphoserine (serine 150). One can recognise a KH domain in the interval asparagine 171–valine 197. Lysine 175 carries the N6-acetyllysine; alternate modification. Lysine 175 participates in a covalent cross-link: Glycyl lysine isopeptide (Lys-Gly) (interchain with G-Cter in SUMO2); alternate. A Phosphothreonine modification is found at threonine 183. The segment at proline 280 to threonine 317 is disordered. Omega-N-methylarginine is present on residues arginine 282, arginine 284, and arginine 291. Over residues glycine 283–alanine 293 the composition is skewed to low complexity. An Asymmetric dimethylarginine modification is found at arginine 304. Residues glycine 307–glycine 316 show a composition bias toward low complexity. Residues arginine 310 and arginine 315 each carry the omega-N-methylarginine; by PRMT1 modification. Arginine 320 bears the Dimethylated arginine; alternate mark. An Omega-N-methylarginine; by PRMT1; alternate modification is found at arginine 320. Residue arginine 325 is modified to Omega-N-methylarginine; by PRMT1. The segment at glycine 326 to proline 345 is disordered. Dimethylated arginine; alternate is present on residues arginine 331 and arginine 340. Residues arginine 331 and arginine 340 each carry the omega-N-methylarginine; by PRMT1; alternate modification. Arginine 331 carries the post-translational modification Asymmetric dimethylarginine; alternate. Positions glycine 351–tyrosine 443 are interaction with HNRNPA1. At tyrosine 387 the chain carries Phosphotyrosine. Serine 390 is subject to Phosphoserine. The segment at glycine 400–arginine 420 is interaction with ZBTB7A. The tract at residues tyrosine 411–tyrosine 443 is disordered. Lysine 432 participates in a covalent cross-link: Glycyl lysine isopeptide (Lys-Gly) (interchain with G-Cter in SUMO2). Positions alanine 434–tyrosine 443 are enriched in basic and acidic residues. Phosphotyrosine; by PTK6 is present on residues tyrosine 435, tyrosine 440, and tyrosine 443.

This sequence belongs to the KHDRBS family. In terms of assembly, self-associates to form homooligomers when bound to RNA, oligomerization appears to be limited when binding to proteins. Forms a trimeric complex in the nucleus consisting of BANP, HDAC6 and KHDRBS1/SAM68; HDAC6 keeps KHDRBS1 in a deacetylated state which inhibits the inclusion of CD44 alternate exons. The complex is disrupted by MAPK1/MAPK3-mediated phosphorylation of BANP which results in BANP export to the cytoplasm. This facilitates acetylation of KHDRBS1 and CD44 variant exon inclusion. Interacts with KHDRBS3/SLIM-2 and KHDRBS2/SLIM-1; heterooligomer formation of KHDRBS family proteins may modulate RNA substrate specificity. Interacts with RASA1, FYN, GRB2, PLCG1, SRC, CBP and PRMT1. Interacts with PTK6 (via SH3 and SH2 domains). Forms a complex with ILF2, ILF3, YLPM1, RBMX, NCOA5 and PPP1CA. Binds WBP4/FBP21 (via WW domains), FNBP4/FBP30 (via WW domains). Interacts (via Arg/Gly-rich-flanked Pro-rich regions) with FYN (via the SH3 domain). Interacts with APC, HNRNPA1. Interacts with the non-receptor tyrosine kinase SRMS; the interaction leads to phosphorylation of KHDRBS1. Interacts with ZBTB7A; negatively regulates KHDRBS1 splicing activity toward BCL2L1. Post-translationally, tyrosine phosphorylated by several non-receptor tyrosine kinases including LCK, FYN and JAK3. Also tyrosine phosphorylated by the non-receptor tyrosine kinase SRMS in an EGF-dependent manner. Phosphorylation by PTK6 negatively regulates its RNA binding ability. Phosphorylation by PTK6 at Tyr-440 dictates the nuclear localization of KHDRBS1. Phosphorylation by MAPK1 at Ser-58, Thr-71 and Thr-84 regulates CD44 alternative splicing by promoting CD44 exon v5 inclusion. Acetylated. Positively correlates with ability to bind RNA. Deacetylated by HDAC6; this regulates alternative splicing by inhibiting the inclusion of CD44 alternate exons. In terms of processing, arginine methylation is required for nuclear localization. Inhibits interaction with Src-like SH3 domains, but not interaction with WW domains of WBP4/FBP21 and FNBP4/FBP30. As to expression, in adult cerebellum expressed in most neuronal cell populations, specifically in cerebellar granule cells of the internal granular layer, ROR(alpha)-positive Purkinje cells, internal granular layer and molecular layer interneurons (at protein level).

The protein resides in the nucleus. It localises to the cytoplasm. It is found in the membrane. Its function is as follows. Recruited and tyrosine phosphorylated by several receptor systems, for example the T-cell, leptin and insulin receptors. Once phosphorylated, functions as an adapter protein in signal transduction cascades by binding to SH2 and SH3 domain-containing proteins. Role in G2-M progression in the cell cycle. Represses CBP-dependent transcriptional activation apparently by competing with other nuclear factors for binding to CBP. Also acts as a putative regulator of mRNA stability and/or translation rates and mediates mRNA nuclear export. Positively regulates the association of constitutive transport element (CTE)-containing mRNA with large polyribosomes and translation initiation. May not be involved in the nucleocytoplasmic export of unspliced (CTE)-containing RNA species. RNA-binding protein that plays a role in the regulation of alternative splicing and influences mRNA splice site selection and exon inclusion. Binds to RNA containing 5'-[AU]UAA-3' as a bipartite motif spaced by more than 15 nucleotides. Binds poly(A). In cooperation with HNRNPA1 modulates alternative splicing of BCL2L1 by promoting splicing toward isoform Bcl-X(S), and of SMN1. Can regulate CD44 alternative splicing in a Ras pathway-dependent manner. Can regulate alternative splicing of NRXN1 and NRXN3 in the laminin G-like domain 6 containing the evolutionary conserved neurexin alternative spliced segment 4 (AS4) involved in neurexin selective targeting to postsynaptic partners. In a neuronal activity-dependent manner cooperates synergistically with KHDRBS2/SLIM-1 in regulation of NRXN1 exon skipping at AS4. The cooperation with KHDRBS2/SLIM-1 is antagonistic for regulation of NXRN3 alternative splicing at AS4. This Mus musculus (Mouse) protein is KH domain-containing, RNA-binding, signal transduction-associated protein 1.